Consider the following 213-residue polypeptide: Motile sperm domain-containing protein 1 (213 aa).

The region spanning 16–143 is the MSP domain; it reads PVFVFPTELI…KEHLTESVFF (128 aa). 2 helical membrane-spanning segments follow: residues 159-179 and 191-211; these read SLLT…PTLG and LSVN…MAIL. The Nuclear export signal motif lies at 205–208; the sequence is LITM.

The protein localises to the endoplasmic reticulum membrane. It localises to the golgi apparatus membrane. Functionally, plays a role in differentiation and/or proliferation of mesenchymal stem cells. Proposed to be involved in epithelial-to-mesenchymal transition (EMT). However, another study suggests that it is not required for EMT or stem cell self-renewal and acts during later stages of differentiation. The polypeptide is Motile sperm domain-containing protein 1 (Mospd1) (Rattus norvegicus (Rat)).